Reading from the N-terminus, the 435-residue chain is Probable glycine dehydrogenase (decarboxylating) subunit 1 (435 aa).

Belongs to the GcvP family. N-terminal subunit subfamily. As to quaternary structure, the glycine cleavage system is composed of four proteins: P, T, L and H. In this organism, the P 'protein' is a heterodimer of two subunits.

It catalyses the reaction N(6)-[(R)-lipoyl]-L-lysyl-[glycine-cleavage complex H protein] + glycine + H(+) = N(6)-[(R)-S(8)-aminomethyldihydrolipoyl]-L-lysyl-[glycine-cleavage complex H protein] + CO2. In terms of biological role, the glycine cleavage system catalyzes the degradation of glycine. The P protein binds the alpha-amino group of glycine through its pyridoxal phosphate cofactor; CO(2) is released and the remaining methylamine moiety is then transferred to the lipoamide cofactor of the H protein. The polypeptide is Probable glycine dehydrogenase (decarboxylating) subunit 1 (Coprothermobacter proteolyticus (strain ATCC 35245 / DSM 5265 / OCM 4 / BT)).